Consider the following 1151-residue polypeptide: Trafficking protein particle complex subunit 9 (1151 aa).

The protein belongs to the NIBP family. As to quaternary structure, part of the multisubunit TRAPP (transport protein particle) complex.

The protein resides in the golgi apparatus. The protein localises to the cis-Golgi network. It is found in the endoplasmic reticulum. Its subcellular location is the cytoplasm. In terms of biological role, functions as an activator of NF-kappa-B through increased phosphorylation of the IKK complex. May function in neuronal cells differentiation. May play a role in vesicular transport from endoplasmic reticulum to Golgi. This Xenopus laevis (African clawed frog) protein is Trafficking protein particle complex subunit 9 (trappc9).